Consider the following 315-residue polypeptide: Ribosomal protein L11 methyltransferase (315 aa).

4 residues coordinate S-adenosyl-L-methionine: T162, G183, D205, and N248.

The protein belongs to the methyltransferase superfamily. PrmA family.

Its subcellular location is the cytoplasm. It carries out the reaction L-lysyl-[protein] + 3 S-adenosyl-L-methionine = N(6),N(6),N(6)-trimethyl-L-lysyl-[protein] + 3 S-adenosyl-L-homocysteine + 3 H(+). Its function is as follows. Methylates ribosomal protein L11. This Enterococcus faecalis (strain ATCC 700802 / V583) protein is Ribosomal protein L11 methyltransferase.